The following is a 164-amino-acid chain: Deoxyuridine 5'-triphosphate nucleotidohydrolase (164 aa).

Residues 66–68 (RSG), Asn79, 83–85 (TVD), and Lys93 contribute to the substrate site.

This sequence belongs to the dUTPase family. It depends on Mg(2+) as a cofactor.

It catalyses the reaction dUTP + H2O = dUMP + diphosphate + H(+). It participates in pyrimidine metabolism; dUMP biosynthesis; dUMP from dCTP (dUTP route): step 2/2. Its function is as follows. This enzyme is involved in nucleotide metabolism: it produces dUMP, the immediate precursor of thymidine nucleotides and it decreases the intracellular concentration of dUTP so that uracil cannot be incorporated into DNA. This Rhodococcus erythropolis (strain PR4 / NBRC 100887) protein is Deoxyuridine 5'-triphosphate nucleotidohydrolase.